We begin with the raw amino-acid sequence, 225 residues long: Pyridoxine/pyridoxamine 5'-phosphate oxidase (225 aa).

Residues 21–24 (RKSY) and lysine 79 each bind substrate. FMN contacts are provided by residues 74-79 (RVVLIK), 89-90 (YT), arginine 95, and lysine 96. The substrate site is built by tyrosine 136, arginine 140, and serine 144. Residues 153–154 (QS) and tryptophan 197 each bind FMN. Residue 203-205 (RLH) participates in substrate binding. Residue arginine 207 participates in FMN binding.

Belongs to the pyridoxamine 5'-phosphate oxidase family. In terms of assembly, homodimer. The cofactor is FMN.

The catalysed reaction is pyridoxamine 5'-phosphate + O2 + H2O = pyridoxal 5'-phosphate + H2O2 + NH4(+). It carries out the reaction pyridoxine 5'-phosphate + O2 = pyridoxal 5'-phosphate + H2O2. The protein operates within cofactor metabolism; pyridoxal 5'-phosphate salvage; pyridoxal 5'-phosphate from pyridoxamine 5'-phosphate: step 1/1. It functions in the pathway cofactor metabolism; pyridoxal 5'-phosphate salvage; pyridoxal 5'-phosphate from pyridoxine 5'-phosphate: step 1/1. Catalyzes the oxidation of either pyridoxine 5'-phosphate (PNP) or pyridoxamine 5'-phosphate (PMP) into pyridoxal 5'-phosphate (PLP). The polypeptide is Pyridoxine/pyridoxamine 5'-phosphate oxidase (Paracidovorax citrulli (strain AAC00-1) (Acidovorax citrulli)).